The chain runs to 351 residues: Leukotriene B4 receptor 1 (351 aa).

Over 1-21 (MAANTTSPAAPSSPGGMSLSL) the chain is Extracellular. Residue Asn-4 is glycosylated (N-linked (GlcNAc...) asparagine). A helical transmembrane segment spans residues 22-44 (LPIVLLSVALAVGLPGNSFVVWS). Topologically, residues 45–56 (ILKRMQKRTVTA) are cytoplasmic. Residues 57 to 77 (LLVLNLALADLAVLLTAPFFL) form a helical membrane-spanning segment. At 78–93 (HFLARGTWSFREMGCR) the chain is on the extracellular side. A helical membrane pass occupies residues 94-115 (LCHYVCGISMYASVLLITIMSL). At 116-140 (DRSLAVARPFMSQKVRTKAFARWVL) the chain is on the cytoplasmic side. Residues 141 to 161 (AGIWVVSFLLAIPVLVYRTVK) traverse the membrane as a helical segment. Over 162 to 179 (WNNRTLICAPNYPNKEHK) the chain is Extracellular. N-linked (GlcNAc...) asparagine glycosylation occurs at Asn-164. The chain crosses the membrane as a helical span at residues 180-200 (VFHLLFEAITGFLLPFLAVVA). The Cytoplasmic portion of the chain corresponds to 201-222 (SYSDIGRRLQARRFRRSRRTGR). Residues 223–243 (LVVLIILAFAAFWLPYHLVNL) traverse the membrane as a helical segment. Over 244-268 (VEAGRTVAGWDKNSPAGQRLRLARY) the chain is Extracellular. Residues 269–289 (VLIALAFLSSSVNPVLYACAG) traverse the membrane as a helical segment. The Cytoplasmic portion of the chain corresponds to 290-351 (GGLLRSAGVG…TSSTIPESSK (62 aa)). Polar residues-rich tracts occupy residues 311 to 326 (EVSS…QTPK) and 339 to 351 (SFMT…ESSK). Residues 311 to 351 (EVSSTRRGGTLVQTPKDTPACPEPGPTDSFMTSSTIPESSK) are disordered.

This sequence belongs to the G-protein coupled receptor 1 family. In terms of processing, phosphorylated by GRK6 upon leukotriene B4 binding; which promotes desensitization. Highly expressed on activated leukocytes, including eosinophils.

Its subcellular location is the cell membrane. Receptor for leukotriene B4, a potent chemoattractant involved in inflammation and immune response. This Mus musculus (Mouse) protein is Leukotriene B4 receptor 1 (Ltb4r).